The primary structure comprises 783 residues: Endonuclease MutS2 (783 aa).

Position 328-335 (328-335 (GPNTGGKT)) interacts with ATP. Residues 708-783 (LDLRGKRYEE…GSGCTIATLG (76 aa)) form the Smr domain.

Belongs to the DNA mismatch repair MutS family. MutS2 subfamily. Homodimer. Binds to stalled ribosomes, contacting rRNA.

Its function is as follows. Endonuclease that is involved in the suppression of homologous recombination and thus may have a key role in the control of bacterial genetic diversity. Acts as a ribosome collision sensor, splitting the ribosome into its 2 subunits. Detects stalled/collided 70S ribosomes which it binds and splits by an ATP-hydrolysis driven conformational change. Acts upstream of the ribosome quality control system (RQC), a ribosome-associated complex that mediates the extraction of incompletely synthesized nascent chains from stalled ribosomes and their subsequent degradation. Probably generates substrates for RQC. The polypeptide is Endonuclease MutS2 (Streptococcus thermophilus (strain ATCC BAA-250 / LMG 18311)).